The primary structure comprises 702 residues: Polyribonucleotide nucleotidyltransferase (702 aa).

Mg(2+) contacts are provided by Asp-485 and Asp-491. The KH domain occupies 552–612 (PRTEIICIDP…EGVKKAISII (61 aa)). Residues 622-690 (GEIYLGKVTK…NQGRINLSRK (69 aa)) enclose the S1 motif domain.

This sequence belongs to the polyribonucleotide nucleotidyltransferase family. It depends on Mg(2+) as a cofactor.

The protein resides in the cytoplasm. It catalyses the reaction RNA(n+1) + phosphate = RNA(n) + a ribonucleoside 5'-diphosphate. Involved in mRNA degradation. Catalyzes the phosphorolysis of single-stranded polyribonucleotides processively in the 3'- to 5'-direction. This is Polyribonucleotide nucleotidyltransferase from Clostridium botulinum (strain Langeland / NCTC 10281 / Type F).